The following is a 208-amino-acid chain: Pyrophosphate-energized proton pump 2 (208 aa).

A run of 5 helical transmembrane segments spans residues 19 to 39 (AYPL…TFFV), 54 to 74 (GLIV…SFTI), 89 to 109 (GGNL…IVVI), 140 to 160 (LAVS…GIIA), and 167 to 187 (LFGT…IVAL).

It belongs to the H(+)-translocating pyrophosphatase (TC 3.A.10) family. In terms of assembly, homodimer. The cofactor is Mg(2+).

It is found in the cell inner membrane. The catalysed reaction is diphosphate + H2O + H(+)(in) = 2 phosphate + 2 H(+)(out). In terms of biological role, proton pump that utilizes the energy of pyrophosphate hydrolysis as the driving force for proton movement across the membrane. Generates a proton motive force. This chain is Pyrophosphate-energized proton pump 2 (hppA2), found in Mycoplana dimorpha.